A 262-amino-acid polypeptide reads, in one-letter code: Tryptophan synthase alpha chain (262 aa).

Catalysis depends on proton acceptor residues E47 and D58.

This sequence belongs to the TrpA family. Tetramer of two alpha and two beta chains.

It catalyses the reaction (1S,2R)-1-C-(indol-3-yl)glycerol 3-phosphate + L-serine = D-glyceraldehyde 3-phosphate + L-tryptophan + H2O. The protein operates within amino-acid biosynthesis; L-tryptophan biosynthesis; L-tryptophan from chorismate: step 5/5. In terms of biological role, the alpha subunit is responsible for the aldol cleavage of indoleglycerol phosphate to indole and glyceraldehyde 3-phosphate. The polypeptide is Tryptophan synthase alpha chain (Chromobacterium violaceum (strain ATCC 12472 / DSM 30191 / JCM 1249 / CCUG 213 / NBRC 12614 / NCIMB 9131 / NCTC 9757 / MK)).